A 328-amino-acid chain; its full sequence is Cytochrome c biogenesis protein CcsA (328 aa).

Transmembrane regions (helical) follow at residues 15 to 35, 37 to 57, 68 to 88, 97 to 117, 142 to 162, 236 to 256, 271 to 291, and 297 to 317; these read FLVLFLTMMIYWVGAAFPSVP, LQALGTAGVAIANLCIAALLG, ISNLYESLFFLAWGVTAAHLI, LVGVVTTPVAMGISAFAALTL, VMMLSYATLMVGSALAIAFLF, IIGLGFPLLTIGIIAGAVWAN, WALITWLVFAAYLHARITKGW, and AILAASGFVVVWVCYLGVNLL.

This sequence belongs to the CcmF/CycK/Ccl1/NrfE/CcsA family. In terms of assembly, may interact with ccs1.

The protein resides in the cellular thylakoid membrane. Its function is as follows. Required during biogenesis of c-type cytochromes (cytochrome c6 and cytochrome f) at the step of heme attachment. The protein is Cytochrome c biogenesis protein CcsA of Gloeothece citriformis (strain PCC 7424) (Cyanothece sp. (strain PCC 7424)).